Consider the following 543-residue polypeptide: Kelch repeat and BTB domain-containing protein 4 (543 aa).

In terms of domain architecture, BTB spans 70–137; sequence ADVTISVEGR…IYHGTVKLRA (68 aa). Residues 172 to 264 enclose the BACK domain; that stretch reads CLQVMWLADR…SLKEIGENVH (93 aa). Kelch repeat units follow at residues 264-310, 311-353, 356-403, 405-455, and 457-505; these read HIYL…KHGG, DLYV…SVPG, AIYS…NLNG, IYLL…VHKD, and VFIV…YVFR.

As to quaternary structure, component of the BCR(KBTBD4) E3 ubiquitin ligase complex, at least composed of CUL3, KBTBD4 and RBX1.

Functionally, substrate-specific adapter of a BCR (BTB-CUL3-RBX1) E3 ubiquitin ligase complex which targets CoREST corepressor complex components RCOR1, KDM1A/LSD1 and HDAC2 for proteasomal degradation. RCOR1 is likely to be the primary target while degradation of KDM1A and HDAC2 is likely due to their association with RCOR1. Also targets RCOR3, MIER2 and MIER3 for proteasomal degradation as well as associated proteins ZNF217 and RREB1. Degradation is dependent on the presence of an ELM2 domain in the target proteins. This Macaca fascicularis (Crab-eating macaque) protein is Kelch repeat and BTB domain-containing protein 4 (KBTBD4).